The primary structure comprises 73 residues: MSDEKTQLIEAFYNFDGDYDGFVSVEEFRGIIRDGLPMTEAEITEFFEAADPNNTGFIDYKAFAAMLYSVDES.

EF-hand domains lie at 3–38 and 38–73; these read DEKT…GLPM and MTEA…VDES. Ca(2+) is bound by residues D16, D18, D20, and E27.

As to quaternary structure, myosin I is a dimer of a heavy and a light chain. Inability to self-assemble into filaments. Interacts with myoB. Does not interact with myoC or myoD.

In terms of biological role, functions as the light chain for myosin-B. Binds calcium with submicromolar affinity and may sense physiological calcium changes. This Dictyostelium discoideum (Social amoeba) protein is Myosin-IB light chain (mlcB).